We begin with the raw amino-acid sequence, 571 residues long: Proline--tRNA ligase (571 aa).

Belongs to the class-II aminoacyl-tRNA synthetase family. ProS type 1 subfamily. In terms of assembly, homodimer.

The protein resides in the cytoplasm. The catalysed reaction is tRNA(Pro) + L-proline + ATP = L-prolyl-tRNA(Pro) + AMP + diphosphate. In terms of biological role, catalyzes the attachment of proline to tRNA(Pro) in a two-step reaction: proline is first activated by ATP to form Pro-AMP and then transferred to the acceptor end of tRNA(Pro). As ProRS can inadvertently accommodate and process non-cognate amino acids such as alanine and cysteine, to avoid such errors it has two additional distinct editing activities against alanine. One activity is designated as 'pretransfer' editing and involves the tRNA(Pro)-independent hydrolysis of activated Ala-AMP. The other activity is designated 'posttransfer' editing and involves deacylation of mischarged Ala-tRNA(Pro). The misacylated Cys-tRNA(Pro) is not edited by ProRS. The chain is Proline--tRNA ligase from Haemophilus ducreyi (strain 35000HP / ATCC 700724).